A 642-amino-acid chain; its full sequence is Threonine--tRNA ligase (642 aa).

The region spanning 1–61 (MPIITLPDGS…EHDASLEIIT (61 aa)) is the TGS domain. The catalytic stretch occupies residues 244 to 535 (DHRKIGKQLD…LIEEYAGFFP (292 aa)). Zn(2+)-binding residues include Cys-335, His-386, and His-512.

It belongs to the class-II aminoacyl-tRNA synthetase family. As to quaternary structure, homodimer. It depends on Zn(2+) as a cofactor.

It is found in the cytoplasm. The enzyme catalyses tRNA(Thr) + L-threonine + ATP = L-threonyl-tRNA(Thr) + AMP + diphosphate + H(+). Catalyzes the attachment of threonine to tRNA(Thr) in a two-step reaction: L-threonine is first activated by ATP to form Thr-AMP and then transferred to the acceptor end of tRNA(Thr). Also edits incorrectly charged L-seryl-tRNA(Thr). The sequence is that of Threonine--tRNA ligase from Vibrio cholerae serotype O1 (strain M66-2).